The following is a 180-amino-acid chain: Large ribosomal subunit protein uL6 (180 aa).

This sequence belongs to the universal ribosomal protein uL6 family. Part of the 50S ribosomal subunit.

Its function is as follows. This protein binds to the 23S rRNA, and is important in its secondary structure. It is located near the subunit interface in the base of the L7/L12 stalk, and near the tRNA binding site of the peptidyltransferase center. This is Large ribosomal subunit protein uL6 from Dictyoglomus thermophilum (strain ATCC 35947 / DSM 3960 / H-6-12).